Consider the following 289-residue polypeptide: Dihydropteroate synthase (289 aa).

Residues Thr-28–Lys-282 enclose the Pterin-binding domain. Residue Asn-35 coordinates Mg(2+). (7,8-dihydropterin-6-yl)methyl diphosphate contacts are provided by residues Thr-75, Asp-109, Asn-128, Asp-199, Lys-235, and Arg-270 to His-272.

Belongs to the DHPS family. It depends on Mg(2+) as a cofactor.

The enzyme catalyses (7,8-dihydropterin-6-yl)methyl diphosphate + 4-aminobenzoate = 7,8-dihydropteroate + diphosphate. It participates in cofactor biosynthesis; tetrahydrofolate biosynthesis; 7,8-dihydrofolate from 2-amino-4-hydroxy-6-hydroxymethyl-7,8-dihydropteridine diphosphate and 4-aminobenzoate: step 1/2. Its function is as follows. Catalyzes the condensation of para-aminobenzoate (pABA) with 6-hydroxymethyl-7,8-dihydropterin diphosphate (DHPt-PP) to form 7,8-dihydropteroate (H2Pte), the immediate precursor of folate derivatives. In Synechocystis sp. (strain ATCC 27184 / PCC 6803 / Kazusa), this protein is Dihydropteroate synthase (folP).